A 93-amino-acid chain; its full sequence is MRILPISTIKGKLNEFVDAVSSTQDQITITKNGAPAAVLVGADEWESLQETLYWLAQPGIRESIAEADADIASGRTYGEDEIRAEFGVPRRPH.

This sequence belongs to the phD/YefM antitoxin family. In terms of assembly, interacts with toxin RelG, which neutralizes the toxin. Also interacts with toxins RelE and RelK in vitro, in M.smegmatis coexpression with non-cognate toxins increases the toxicity of RelE but not of RelK.

Functionally, antitoxin component of a type II toxin-antitoxin (TA) system. Upon expression in M.smegmatis neutralizes the effect of toxin RelE2. Its function is as follows. Induces its own promoter, in combination with RelG represses its own promoter. Has been seen to bind DNA in complex with toxin RelG but not alone. This chain is Antitoxin RelF (relF), found in Mycobacterium tuberculosis (strain ATCC 25618 / H37Rv).